The following is a 282-amino-acid chain: Bifunctional protein FolD (282 aa).

NADP(+) contacts are provided by residues 164–166, Ile189, and Ile230; that span reads GAS.

This sequence belongs to the tetrahydrofolate dehydrogenase/cyclohydrolase family. Homodimer.

The catalysed reaction is (6R)-5,10-methylene-5,6,7,8-tetrahydrofolate + NADP(+) = (6R)-5,10-methenyltetrahydrofolate + NADPH. It carries out the reaction (6R)-5,10-methenyltetrahydrofolate + H2O = (6R)-10-formyltetrahydrofolate + H(+). The protein operates within one-carbon metabolism; tetrahydrofolate interconversion. Its function is as follows. Catalyzes the oxidation of 5,10-methylenetetrahydrofolate to 5,10-methenyltetrahydrofolate and then the hydrolysis of 5,10-methenyltetrahydrofolate to 10-formyltetrahydrofolate. This is Bifunctional protein FolD from Campylobacter jejuni subsp. jejuni serotype O:2 (strain ATCC 700819 / NCTC 11168).